The sequence spans 257 residues: 5'-nucleotidase SurE (257 aa).

A divalent metal cation is bound by residues D11, D12, S42, and N99.

Belongs to the SurE nucleotidase family. The cofactor is a divalent metal cation.

The protein resides in the cytoplasm. The catalysed reaction is a ribonucleoside 5'-phosphate + H2O = a ribonucleoside + phosphate. In terms of biological role, nucleotidase that shows phosphatase activity on nucleoside 5'-monophosphates. The polypeptide is 5'-nucleotidase SurE (Flavobacterium psychrophilum (strain ATCC 49511 / DSM 21280 / CIP 103535 / JIP02/86)).